The primary structure comprises 502 residues: MQIKAEEISKIIEEQIQSYEQRVEMSETGTVLYVGDGIARVHGVQNAMAMELLEFPGGLMGMVLNLEEDNVGVALLGDDTQIKEGDPVKRTGKIFSVPVGDAVMGRVLNPLGQPIDGLGPLDAKEFRPVELKAPGIIARKSVHEPMPTGIKAIDAMTPIGRGQRELVIGDRQTGKTAVCIDAILAQKNTDIHCFYVAIGQKKATVALVADTLRKYGAMEYTTIISATASEPAPLQFISAYSGCTMAEFYRNNGKHALIIYDDLSKQAVAYRQMSLLLRRPPGREAYPGDVFYLHSRLLERAAKVNDSLGAGSLTALPIIETQAGDVSAYIPTNVISITDGQVYLEPNLFNAGIRPAINVGLSVSRVGGAAQIKAMKQVAGTMRLDLAQYRELAAFAQFGSDLDKATKAKLDRGARLVELLKQPQYEPMPTEEQVASMYAATRGLMDDVAVADIRKFETAMLDYLRSGKADILNDIKTKKALDQDIENRLKAAIAEFKKGYQA.

169–176 (GDRQTGKT) lines the ATP pocket.

It belongs to the ATPase alpha/beta chains family. As to quaternary structure, F-type ATPases have 2 components, CF(1) - the catalytic core - and CF(0) - the membrane proton channel. CF(1) has five subunits: alpha(3), beta(3), gamma(1), delta(1), epsilon(1). CF(0) has three main subunits: a(1), b(2) and c(9-12). The alpha and beta chains form an alternating ring which encloses part of the gamma chain. CF(1) is attached to CF(0) by a central stalk formed by the gamma and epsilon chains, while a peripheral stalk is formed by the delta and b chains.

Its subcellular location is the cell inner membrane. It catalyses the reaction ATP + H2O + 4 H(+)(in) = ADP + phosphate + 5 H(+)(out). Its function is as follows. Produces ATP from ADP in the presence of a proton gradient across the membrane. The alpha chain is a regulatory subunit. The polypeptide is ATP synthase subunit alpha (Nitratidesulfovibrio vulgaris (strain ATCC 29579 / DSM 644 / CCUG 34227 / NCIMB 8303 / VKM B-1760 / Hildenborough) (Desulfovibrio vulgaris)).